The chain runs to 79 residues: Conotoxin TsMSGL-2 (79 aa).

Positions 1–24 (MSGLGIMVLTLLLLVFMATSHQDA) are cleaved as a signal peptide. The propeptide occupies 25 to 46 (GEKQATQRDAVNVRRRRSIAGR). Cystine bridges form between Cys52-Cys64, Cys56-Cys73, and Cys63-Cys77. Leu78 carries the post-translational modification Leucine amide.

It belongs to the conotoxin O3 superfamily. In terms of tissue distribution, expressed by the venom duct.

The protein resides in the secreted. This is Conotoxin TsMSGL-2 from Conus tessulatus (Tessellate cone).